The following is a 215-amino-acid chain: Ribonuclease S-6 (215 aa).

The first 22 residues, methionine 1–glycine 22, serve as a signal peptide directing secretion. An RNA-binding site is contributed by glutamine 32. Cysteine 38 and cysteine 43 are joined by a disulfide. An N-linked (GlcNAc...) asparagine glycan is attached at asparagine 49. Histidine 53 serves as a coordination point for RNA. The active-site Proton donor is histidine 53. The N-linked (GlcNAc...) asparagine glycan is linked to asparagine 59. A disulfide bridge links cysteine 67 with cysteine 116. Residues aspartate 91 to leucine 92, arginine 94, phenylalanine 105, arginine 108 to glutamate 109, and lysine 112 to histidine 113 each bind RNA. Glutamate 109 is a catalytic residue. Histidine 113 (proton acceptor) is an active-site residue. Residues asparagine 160 and asparagine 172 are each glycosylated (N-linked (GlcNAc...) asparagine). Intrachain disulfides connect cysteine 175/cysteine 204 and cysteine 187/cysteine 198.

The protein belongs to the RNase T2 family.

It is found in the secreted. The protein localises to the extracellular space. It catalyses the reaction a ribonucleotidyl-ribonucleotide-RNA + H2O = a 3'-end 3'-phospho-ribonucleotide-RNA + a 5'-end dephospho-ribonucleoside-RNA + H(+). Its function is as follows. Self-incompatibility (SI) is the inherited ability of a flowering plant to prevent self-fertilization by discriminating between self and non-self pollen during pollination. In many species of the Solanaceae, self-incompatibility is controlled by the single, multiallelic locus S. This stylar glycoprotein is associated with expression of self-incompatibility in potato. The polypeptide is Ribonuclease S-6 (Nicotiana alata (Winged tobacco)).